A 274-amino-acid chain; its full sequence is 4-hydroxy-3-methylbut-2-enyl diphosphate reductase (274 aa).

Residue C12 coordinates [4Fe-4S] cluster. (2E)-4-hydroxy-3-methylbut-2-enyl diphosphate is bound by residues H36 and H70. 2 residues coordinate dimethylallyl diphosphate: H36 and H70. Isopentenyl diphosphate contacts are provided by H36 and H70. C92 is a binding site for [4Fe-4S] cluster. H120 is a (2E)-4-hydroxy-3-methylbut-2-enyl diphosphate binding site. H120 provides a ligand contact to dimethylallyl diphosphate. Isopentenyl diphosphate is bound at residue H120. Catalysis depends on E122, which acts as the Proton donor. T158 provides a ligand contact to (2E)-4-hydroxy-3-methylbut-2-enyl diphosphate. C186 contacts [4Fe-4S] cluster. Positions 214, 215, 216, and 258 each coordinate (2E)-4-hydroxy-3-methylbut-2-enyl diphosphate. Residues S214, S215, N216, and S258 each coordinate dimethylallyl diphosphate. S214, S215, N216, and S258 together coordinate isopentenyl diphosphate.

It belongs to the IspH family. [4Fe-4S] cluster serves as cofactor.

The catalysed reaction is isopentenyl diphosphate + 2 oxidized [2Fe-2S]-[ferredoxin] + H2O = (2E)-4-hydroxy-3-methylbut-2-enyl diphosphate + 2 reduced [2Fe-2S]-[ferredoxin] + 2 H(+). It carries out the reaction dimethylallyl diphosphate + 2 oxidized [2Fe-2S]-[ferredoxin] + H2O = (2E)-4-hydroxy-3-methylbut-2-enyl diphosphate + 2 reduced [2Fe-2S]-[ferredoxin] + 2 H(+). The protein operates within isoprenoid biosynthesis; dimethylallyl diphosphate biosynthesis; dimethylallyl diphosphate from (2E)-4-hydroxy-3-methylbutenyl diphosphate: step 1/1. Its pathway is isoprenoid biosynthesis; isopentenyl diphosphate biosynthesis via DXP pathway; isopentenyl diphosphate from 1-deoxy-D-xylulose 5-phosphate: step 6/6. Functionally, catalyzes the conversion of 1-hydroxy-2-methyl-2-(E)-butenyl 4-diphosphate (HMBPP) into a mixture of isopentenyl diphosphate (IPP) and dimethylallyl diphosphate (DMAPP). Acts in the terminal step of the DOXP/MEP pathway for isoprenoid precursor biosynthesis. This chain is 4-hydroxy-3-methylbut-2-enyl diphosphate reductase, found in Campylobacter concisus (strain 13826).